The sequence spans 229 residues: Potassium/proton antiporter CemA (229 aa).

4 consecutive transmembrane segments (helical) span residues 7-27, 106-126, 154-174, and 189-209; these read FIPF…YLSF, MILH…YSIL, ILLV…ELLI, and IISS…KYWI.

The protein belongs to the CemA family.

It is found in the plastid. It localises to the chloroplast inner membrane. It catalyses the reaction K(+)(in) + H(+)(out) = K(+)(out) + H(+)(in). In terms of biological role, contributes to K(+)/H(+) antiport activity by supporting proton efflux to control proton extrusion and homeostasis in chloroplasts in a light-dependent manner to modulate photosynthesis. Prevents excessive induction of non-photochemical quenching (NPQ) under continuous-light conditions. Indirectly promotes efficient inorganic carbon uptake into chloroplasts. The sequence is that of Potassium/proton antiporter CemA from Spinacia oleracea (Spinach).